Here is a 737-residue protein sequence, read N- to C-terminus: MAKQVFQTTFAGRELIVETGQVAKQANGSVVVRYGESTVLTAAVMSKKMATGDFFPLQVNYEEKMYAAGKFPGGFMKREGRPSTDATLTARLIDRPIRPMFAEGFRNEVQVINTVLSYDENASAPMAAMFGSSLALSISDIPFDGPIAGVQVGYVDGQIIINPSQEQAEQSLLELTVAGTKHAINMVESGAKELSEEIMLEALLKGHEAVKELIAFQEEIVAAVGKEKAEVELLHVDADLQAEIIAAYNSDLQKAVQVEEKLAREAATQTVKDQVIAVYEEKYADHEEFDRIMRDVAEILEQMEHAEVRRLITEDKVRPDGRKVDEIRPLDAVVDFLPRVHGSGLFTRGQTQALSVLTLAPMGETQIIDGLDPEYKKRFMHHYNFPQYSVGETGRYGAPGRREIGHGALGERALAQVLPSLEEFPYAIRLVAEVLESNGSSSQASICAGTLALMAGGVPIKAPVAGIAMGLISDGNNYTVLTDIQGLEDHFGDMDFKVAGTRDGITALQMDIKIQGITAEILTEALAQAKKARFEILDVIEATIPEVRPELAPTAPKIDTIKIDVDKIKIVIGKGGETIDKIIAETGVKIDIDEEGNVSIYSSDQDAINRAKEIIAGLVREAKVDEVYRAKVVRIEKFGAFVNLFDKTDALVHISEMAWTRTNNVEDLVAIGDEVDVKVIKIDEKGRVDASMKALLPRPPKPERDEKGEKSERPYRPRHHKDHKPKKEITETPKDSE.

Mg(2+) is bound by residues Asp489 and Asp495. One can recognise a KH domain in the interval Pro556–Ile615. Residues Asp625–Lys693 enclose the S1 motif domain. The interval Ser691–Glu737 is disordered. Composition is skewed to basic and acidic residues over residues Pro700–Tyr715 and Pro725–Glu737.

Belongs to the polyribonucleotide nucleotidyltransferase family. Mg(2+) is required as a cofactor.

It localises to the cytoplasm. The catalysed reaction is RNA(n+1) + phosphate = RNA(n) + a ribonucleoside 5'-diphosphate. Involved in mRNA degradation. Catalyzes the phosphorolysis of single-stranded polyribonucleotides processively in the 3'- to 5'-direction. The sequence is that of Polyribonucleotide nucleotidyltransferase from Streptococcus pneumoniae (strain Hungary19A-6).